A 219-amino-acid polypeptide reads, in one-letter code: UPF0319 protein MS0844 (219 aa).

The signal sequence occupies residues 1 to 21 (MKFRLTALAVAALLTSTASFA).

It belongs to the UPF0319 family.

This is UPF0319 protein MS0844 from Mannheimia succiniciproducens (strain KCTC 0769BP / MBEL55E).